We begin with the raw amino-acid sequence, 168 residues long: Zinc finger A20 and AN1 domain-containing stress-associated protein 1 (168 aa).

Residues 13–47 (PSEPKLCVKGCGFFGSPSNMNLCSKCYRDIRATEE) form an A20-type zinc finger. 4 residues coordinate Zn(2+): cysteine 19, cysteine 23, cysteine 35, and cysteine 38. Positions 49–105 (TASAKAAVEKSLNPNKPKTQPQQSQEITQGVLGSGSSSSSTRGGDSAAAPLDPPKST) are disordered. The segment covering 60–76 (LNPNKPKTQPQQSQEIT) has biased composition (polar residues). Low complexity predominate over residues 82 to 94 (SGSSSSSTRGGDS). Residues 103–149 (KSTATRCLSCNKKVGVTGFKCRCGSTFCGTHRYPESHECQFDFKGVA) form an AN1-type zinc finger. Cysteine 109, cysteine 112, cysteine 123, cysteine 125, cysteine 130, histidine 133, histidine 139, and cysteine 141 together coordinate Zn(2+).

May be involved in environmental stress response. This Arabidopsis thaliana (Mouse-ear cress) protein is Zinc finger A20 and AN1 domain-containing stress-associated protein 1 (SAP1).